The primary structure comprises 450 residues: MSSRTSTSSYKRMFGAERQAMVRSTYSSRQYSSPGRTTSRVSYSSASSTSPSLYMSKSARSATRLATETLDFGLADAINTEFKANRTNEKAEMQHVNDRFASYIEEVRFLEQQNKILTAELEQMRGKGSSRVGDLYEDEMRELRRQVDQLINEKASVEVDRDNLGENIERLRQKLQEEMLQREDAENSLRSFRQDVDNASLARLDLERKVESLQEEIAFLKKLHDEELAELQMQIQERHVQIDMEVAKPDLTAALRDVRQQYETLASRNLQESEEWYKSKFADLSEAATRNSEAVRLAKHEANDYRRQLQSLTCDLEALRGTNGSLERQMREMEDNFSIEASGYQDTIVRLEDDIRNTKDEMARHLREYQNLLNVKMALDIEIATYRNLLEGEEYRITTPFPNLSSLSLRESMKEIRPAMDSLSKKVVIKTIETRDGHIINQSTQKDNLE.

Residues 1–81 are head; sequence MSSRTSTSSY…FGLADAINTE (81 aa). A compositionally biased stretch (polar residues) spans 24-38; the sequence is STYSSRQYSSPGRTT. Residues 24 to 56 are disordered; sequence STYSSRQYSSPGRTTSRVSYSSASSTSPSLYMS. Low complexity predominate over residues 39–56; that stretch reads SRVSYSSASSTSPSLYMS. The coil 1A stretch occupies residues 82–117; it reads FKANRTNEKAEMQHVNDRFASYIEEVRFLEQQNKIL. Positions 89–397 constitute an IF rod domain; sequence EKAEMQHVND…NLLEGEEYRI (309 aa). The segment at 118–139 is linker 1; the sequence is TAELEQMRGKGSSRVGDLYEDE. The interval 140–231 is coil 1B; sequence MRELRRQVDQ…KLHDEELAEL (92 aa). Residues 232 to 254 are linker 12; that stretch reads QMQIQERHVQIDMEVAKPDLTAA. The coil 2 stretch occupies residues 255-393; sequence LRDVRQQYET…ATYRNLLEGE (139 aa). Residues 394–450 form a tail region; that stretch reads EYRITTPFPNLSSLSLRESMKEIRPAMDSLSKKVVIKTIETRDGHIINQSTQKDNLE.

The protein belongs to the intermediate filament family. As to quaternary structure, homomer. One of the most prominent phosphoproteins in various cells of mesenchymal origin. Phosphorylation is enhanced during cell division, at which time vimentin filaments are significantly reorganized. As to expression, expressed in low amounts in retina, optic nerve, brain, and spinal cord and in very high amounts in eye lens.

Functionally, vimentins are class-III intermediate filaments found in various non-epithelial cells, especially mesenchymal cells. Vimentin is attached to the nucleus, endoplasmic reticulum, and mitochondria, either laterally or terminally. This Carassius auratus (Goldfish) protein is Vimentin beta.